We begin with the raw amino-acid sequence, 321 residues long: Ribosomal RNA small subunit methyltransferase H (321 aa).

S-adenosyl-L-methionine is bound by residues 33-35, Asp-58, Phe-85, Asp-111, and Gln-118; that span reads AGH.

It belongs to the methyltransferase superfamily. RsmH family.

It is found in the cytoplasm. It carries out the reaction cytidine(1402) in 16S rRNA + S-adenosyl-L-methionine = N(4)-methylcytidine(1402) in 16S rRNA + S-adenosyl-L-homocysteine + H(+). Specifically methylates the N4 position of cytidine in position 1402 (C1402) of 16S rRNA. In Chloroherpeton thalassium (strain ATCC 35110 / GB-78), this protein is Ribosomal RNA small subunit methyltransferase H.